The sequence spans 183 residues: MTMLIVAIGNPGRQYTWTRHNIGFLCADKLLQGFPEAQFKEARKLFSDIAKVESPQGSMVFIKPRTYVNLSGKAVSAVKEYYGIPIDRILVLADDVNHPFGNVRLRQNAGGGGHKGIKSITQSLGSNDYWQLRLGIGRPQREDIELSDFVLGQFTEEEQIGIQSLFIEASALFSQWCSGTQTA.

Tyr-15 is a binding site for tRNA. His-20 serves as the catalytic Proton acceptor. Tyr-67 and Asn-69 together coordinate tRNA.

This sequence belongs to the PTH family. As to quaternary structure, monomer.

It localises to the cytoplasm. It catalyses the reaction an N-acyl-L-alpha-aminoacyl-tRNA + H2O = an N-acyl-L-amino acid + a tRNA + H(+). Hydrolyzes ribosome-free peptidyl-tRNAs (with 1 or more amino acids incorporated), which drop off the ribosome during protein synthesis, or as a result of ribosome stalling. Its function is as follows. Catalyzes the release of premature peptidyl moieties from peptidyl-tRNA molecules trapped in stalled 50S ribosomal subunits, and thus maintains levels of free tRNAs and 50S ribosomes. The polypeptide is Peptidyl-tRNA hydrolase (Chlamydia caviae (strain ATCC VR-813 / DSM 19441 / 03DC25 / GPIC) (Chlamydophila caviae)).